The sequence spans 137 residues: Small ribosomal subunit protein uS12 (137 aa).

The disordered stretch occupies residues 1 to 26; sequence MPTINQLVRKPRQSKIKKSTSPALNK. Residues 9-18 are compositionally biased toward basic residues; it reads RKPRQSKIKK.

It belongs to the universal ribosomal protein uS12 family. As to quaternary structure, part of the 30S ribosomal subunit. Contacts proteins S8 and S17. May interact with IF1 in the 30S initiation complex.

In terms of biological role, with S4 and S5 plays an important role in translational accuracy. Its function is as follows. Interacts with and stabilizes bases of the 16S rRNA that are involved in tRNA selection in the A site and with the mRNA backbone. Located at the interface of the 30S and 50S subunits, it traverses the body of the 30S subunit contacting proteins on the other side and probably holding the rRNA structure together. The combined cluster of proteins S8, S12 and S17 appears to hold together the shoulder and platform of the 30S subunit. The protein is Small ribosomal subunit protein uS12 of Listeria innocua serovar 6a (strain ATCC BAA-680 / CLIP 11262).